A 300-amino-acid polypeptide reads, in one-letter code: uncharacterized protein (300 aa).

Residue tyrosine 53 is the Proton donor of the active site. Serine 210–glutamate 220 serves as a coordination point for NADP(+).

The protein belongs to the aldo/keto reductase family. Aldo/keto reductase 2 subfamily.

This is an uncharacterized protein from Bacillus subtilis (strain 168).